The primary structure comprises 223 residues: Agamous-like MADS-box protein AGL11 (223 aa).

The region spanning 1–61 is the MADS-box domain; that stretch reads MGRGKIEIKR…GRVYEYSNNN (61 aa). One can recognise a K-box domain in the interval 87-177; sequence AQYYQQESAK…RTKIAEVERL (91 aa).

The protein resides in the nucleus. Its function is as follows. Probable transcription factor involved in seed development. This Vitis vinifera (Grape) protein is Agamous-like MADS-box protein AGL11.